Consider the following 185-residue polypeptide: Elongation factor P (185 aa).

Belongs to the elongation factor P family.

Its subcellular location is the cytoplasm. Its pathway is protein biosynthesis; polypeptide chain elongation. Its function is as follows. Involved in peptide bond synthesis. Stimulates efficient translation and peptide-bond synthesis on native or reconstituted 70S ribosomes in vitro. Probably functions indirectly by altering the affinity of the ribosome for aminoacyl-tRNA, thus increasing their reactivity as acceptors for peptidyl transferase. The protein is Elongation factor P of Synechococcus sp. (strain JA-3-3Ab) (Cyanobacteria bacterium Yellowstone A-Prime).